The chain runs to 108 residues: Trp operon repressor homolog (108 aa).

Residues 59–82 (QRQISQLLGVGVATITRGSNELKS) mediate DNA binding.

It belongs to the TrpR family. In terms of assembly, homodimer.

It localises to the cytoplasm. Functionally, this protein is an aporepressor. When complexed with L-tryptophan it binds the operator region of the trp operon and prevents the initiation of transcription. The sequence is that of Trp operon repressor homolog from Aliivibrio fischeri (strain ATCC 700601 / ES114) (Vibrio fischeri).